The sequence spans 459 residues: Tubulin gamma chain (459 aa).

Residue Ala-142–Gly-148 coordinates GTP. The interval Ala-440–Gly-459 is disordered.

It belongs to the tubulin family.

Its subcellular location is the cytoplasm. The protein localises to the cytoskeleton. It localises to the microtubule organizing center. The protein resides in the spindle pole body. Tubulin is the major constituent of microtubules. The gamma chain is found at microtubule organizing centers (MTOC) such as the spindle poles or the centrosome, suggesting that it is involved in the minus-end nucleation of microtubule assembly. The chain is Tubulin gamma chain (TUB4) from Cochliobolus heterostrophus (strain C5 / ATCC 48332 / race O) (Southern corn leaf blight fungus).